A 458-amino-acid chain; its full sequence is UDP-N-acetylmuramate--L-alanine ligase (458 aa).

118–124 (GTHGKTT) is an ATP binding site.

The protein belongs to the MurCDEF family.

It is found in the cytoplasm. It catalyses the reaction UDP-N-acetyl-alpha-D-muramate + L-alanine + ATP = UDP-N-acetyl-alpha-D-muramoyl-L-alanine + ADP + phosphate + H(+). Its pathway is cell wall biogenesis; peptidoglycan biosynthesis. Cell wall formation. The sequence is that of UDP-N-acetylmuramate--L-alanine ligase from Clostridium botulinum (strain Okra / Type B1).